Consider the following 218-residue polypeptide: Small ribosomal subunit protein uS3 (218 aa).

The region spanning 2–71 (SAPQRRLPVY…IGRKGAIVKE (70 aa)) is the KH type-2 domain.

This sequence belongs to the universal ribosomal protein uS3 family. As to quaternary structure, part of the 30S ribosomal subunit.

Functionally, binds the lower part of the 30S subunit head. The sequence is that of Small ribosomal subunit protein uS3 from Pyrobaculum aerophilum (strain ATCC 51768 / DSM 7523 / JCM 9630 / CIP 104966 / NBRC 100827 / IM2).